A 270-amino-acid chain; its full sequence is Putative phosphoenolpyruvate synthase regulatory protein (270 aa).

Position 150-157 (150-157 (GVSRCGKT)) interacts with ADP.

It belongs to the pyruvate, phosphate/water dikinase regulatory protein family. PSRP subfamily.

The catalysed reaction is [pyruvate, water dikinase] + ADP = [pyruvate, water dikinase]-phosphate + AMP + H(+). It catalyses the reaction [pyruvate, water dikinase]-phosphate + phosphate + H(+) = [pyruvate, water dikinase] + diphosphate. Functionally, bifunctional serine/threonine kinase and phosphorylase involved in the regulation of the phosphoenolpyruvate synthase (PEPS) by catalyzing its phosphorylation/dephosphorylation. This chain is Putative phosphoenolpyruvate synthase regulatory protein, found in Shewanella woodyi (strain ATCC 51908 / MS32).